Reading from the N-terminus, the 750-residue chain is Photosystem I P700 chlorophyll a apoprotein A1 (750 aa).

Transmembrane regions (helical) follow at residues 70–93, 156–179, 195–219, 291–309, 346–369, 385–411, 433–455, and 531–549; these read VFSAHFGQLSIIFLWLSGMYFHGA, LYCTAIGALVFAALMLFAGWFHYH, LNHHLAGLLGLGSLSWAGHQVHVSL, IAHHHLAIAILFLIAGHMY, WHAQLSLNLAMLGSLTIVVAHHMY, LSLFTHHMWIGGFLIVGAAAHAAIFMV, AIISHLNWACIFLGFHSFGLYIH, and FLVHHIHAFTIHVTVLILL. [4Fe-4S] cluster contacts are provided by C573 and C582. Transmembrane regions (helical) follow at residues 589-610 and 664-686; these read HVFLGLFWMYNSISVVIFHFSW and LSAYGLFFLGAHFVWAFSLMFLF. Residue H675 coordinates chlorophyll a'. The chlorophyll a site is built by M683 and Y691. W692 serves as a coordination point for phylloquinone. The helical transmembrane segment at 724–744 threads the bilayer; that stretch reads AVGVTHYLLGGIATTWAFFLA.

Belongs to the PsaA/PsaB family. As to quaternary structure, the PsaA/B heterodimer binds the P700 chlorophyll special pair and subsequent electron acceptors. PSI consists of a core antenna complex that captures photons, and an electron transfer chain that converts photonic excitation into a charge separation. The eukaryotic PSI reaction center is composed of at least 11 subunits. It depends on P700 is a chlorophyll a/chlorophyll a' dimer, A0 is one or more chlorophyll a, A1 is one or both phylloquinones and FX is a shared 4Fe-4S iron-sulfur center. as a cofactor.

The protein localises to the plastid. It localises to the chloroplast thylakoid membrane. It carries out the reaction reduced [plastocyanin] + hnu + oxidized [2Fe-2S]-[ferredoxin] = oxidized [plastocyanin] + reduced [2Fe-2S]-[ferredoxin]. Functionally, psaA and PsaB bind P700, the primary electron donor of photosystem I (PSI), as well as the electron acceptors A0, A1 and FX. PSI is a plastocyanin-ferredoxin oxidoreductase, converting photonic excitation into a charge separation, which transfers an electron from the donor P700 chlorophyll pair to the spectroscopically characterized acceptors A0, A1, FX, FA and FB in turn. Oxidized P700 is reduced on the lumenal side of the thylakoid membrane by plastocyanin. The polypeptide is Photosystem I P700 chlorophyll a apoprotein A1 (Solanum bulbocastanum (Wild potato)).